The chain runs to 299 residues: Oxygen-dependent coproporphyrinogen-III oxidase (299 aa).

Ser-92 contacts substrate. A divalent metal cation is bound by residues His-96 and His-106. The active-site Proton donor is His-106. 108-110 (NVR) serves as a coordination point for substrate. A divalent metal cation contacts are provided by His-145 and His-175. The segment at 240–275 (YVEFNLVWDRGTLFGLQTGGRTESILMSMPPLVRWE) is important for dimerization. 258-260 (GGR) lines the substrate pocket.

This sequence belongs to the aerobic coproporphyrinogen-III oxidase family. In terms of assembly, homodimer. The cofactor is a divalent metal cation.

It is found in the cytoplasm. The enzyme catalyses coproporphyrinogen III + O2 + 2 H(+) = protoporphyrinogen IX + 2 CO2 + 2 H2O. The protein operates within porphyrin-containing compound metabolism; protoporphyrin-IX biosynthesis; protoporphyrinogen-IX from coproporphyrinogen-III (O2 route): step 1/1. Its function is as follows. Involved in the heme biosynthesis. Catalyzes the aerobic oxidative decarboxylation of propionate groups of rings A and B of coproporphyrinogen-III to yield the vinyl groups in protoporphyrinogen-IX. The polypeptide is Oxygen-dependent coproporphyrinogen-III oxidase (Klebsiella pneumoniae subsp. pneumoniae (strain ATCC 700721 / MGH 78578)).